We begin with the raw amino-acid sequence, 378 residues long: Probable G-protein coupled receptor frpr-1 (378 aa).

A run of 7 helical transmembrane segments spans residues 47–67 (LVVIGLMLPLIGCLGLIGNAL), 85–105 (LFALACSDIVIILTAFFLFFL), 120–140 (AVLSPVMFPLGLTAQTMSVFI), 180–200 (VIVCLKIIVKIFLLGIFYNSP), 243–263 (TIVMAVGPVLLLIVINTAIVI), 277–297 (IITLVLVVCLFISCNVLPLTV), and 315–337 (SNLMVVVNSSCNFLIYYTFGSNF).

Belongs to the G-protein coupled receptor 1 family.

It is found in the cell membrane. This Caenorhabditis elegans protein is Probable G-protein coupled receptor frpr-1.